Reading from the N-terminus, the 350-residue chain is Probable arabinogalactan endo-beta-1,4-galactanase A (350 aa).

The N-terminal stretch at 1 to 16 is a signal peptide; the sequence is MIYSLLLSALPLLSSA. Residue Asn-128 is glycosylated (N-linked (GlcNAc...) asparagine). The active-site Proton donor is Glu-152. The Nucleophile role is filled by Glu-262.

It belongs to the glycosyl hydrolase 53 family.

The protein resides in the secreted. It carries out the reaction The enzyme specifically hydrolyzes (1-&gt;4)-beta-D-galactosidic linkages in type I arabinogalactans.. Its function is as follows. Endogalactanase involved in the degradation of plant cell wall polysaccharides, and more particularly of hairy regions of pectin. This is Probable arabinogalactan endo-beta-1,4-galactanase A (galA) from Aspergillus niger (strain ATCC MYA-4892 / CBS 513.88 / FGSC A1513).